We begin with the raw amino-acid sequence, 234 residues long: Adenosine 5'-phosphosulfate reductase (234 aa).

[4Fe-4S] cluster-binding residues include cysteine 120, cysteine 121, cysteine 203, and cysteine 206. Cysteine 229 acts as the Nucleophile; cysteine thiosulfonate intermediate in catalysis.

It belongs to the PAPS reductase family. CysH subfamily. [4Fe-4S] cluster serves as cofactor.

The protein resides in the cytoplasm. It catalyses the reaction [thioredoxin]-disulfide + sulfite + AMP + 2 H(+) = adenosine 5'-phosphosulfate + [thioredoxin]-dithiol. It functions in the pathway sulfur metabolism; hydrogen sulfide biosynthesis; sulfite from sulfate. Catalyzes the formation of sulfite from adenosine 5'-phosphosulfate (APS) using thioredoxin as an electron donor. The polypeptide is Adenosine 5'-phosphosulfate reductase (Bacillus mycoides (strain KBAB4) (Bacillus weihenstephanensis)).